The chain runs to 948 residues: Phosphatidylinositol-glycan-specific phospholipase D (948 aa).

The signal sequence occupies residues 1-24 (MKNKIILLWLLLIVILCTISNVKG). N-linked (GlcNAc...) asparagine glycosylation is found at Asn-39, Asn-78, Asn-148, Asn-300, Asn-433, Asn-452, Asn-506, and Asn-535. 4 FG-GAP repeats span residues 451-512 (TNFT…SVTI), 526-588 (QVAT…NPAG), 596-656 (LPSI…RISG), and 663-724 (DADY…LNSF). Asn-749 and Asn-788 each carry an N-linked (GlcNAc...) asparagine glycan. 2 FG-GAP repeats span residues 799-861 (NLLL…LTND) and 895-948 (SSGG…NIFQ).

The protein belongs to the GPLD1 family. Ca(2+) serves as cofactor.

It is found in the secreted. It carries out the reaction a 6-(alpha-D-glucosaminyl)-1-(1,2-diacyl-sn-glycero-3-phospho)-1D-myo-inositol + H2O = 6-(alpha-D-glucosaminyl)-1D-myo-inositol + a 1,2-diacyl-sn-glycero-3-phosphate + H(+). Hydrolyzes the inositol phosphate linkage in proteins anchored by phosphatidylinositol glycans (GPI-anchor) thus releasing these proteins from the membrane. May also cleave GPI anchor intermediates intracellularly. The chain is Phosphatidylinositol-glycan-specific phospholipase D (pldG) from Dictyostelium discoideum (Social amoeba).